Here is a 320-residue protein sequence, read N- to C-terminus: Phospho-N-acetylmuramoyl-pentapeptide-transferase (320 aa).

9 consecutive transmembrane segments (helical) span residues 5–25 (FWAF…VIKF), 51–71 (MGGA…SVAY), 75–95 (IGFV…IIGG), 121–141 (LCAV…ILNI), 143–163 (FIGV…WLVG), 176–196 (GLLT…ALGV), 198–218 (NHII…FLLF), 241–261 (IESI…IFVI), and 300–320 (IDAL…LYMS).

It belongs to the glycosyltransferase 4 family. MraY subfamily. Mg(2+) is required as a cofactor.

The protein localises to the cell membrane. It carries out the reaction UDP-N-acetyl-alpha-D-muramoyl-L-alanyl-gamma-D-glutamyl-L-lysyl-D-alanyl-D-alanine + di-trans,octa-cis-undecaprenyl phosphate = Mur2Ac(oyl-L-Ala-gamma-D-Glu-L-Lys-D-Ala-D-Ala)-di-trans,octa-cis-undecaprenyl diphosphate + UMP. It participates in cell wall biogenesis; peptidoglycan biosynthesis. Catalyzes the initial step of the lipid cycle reactions in the biosynthesis of the cell wall peptidoglycan: transfers peptidoglycan precursor phospho-MurNAc-pentapeptide from UDP-MurNAc-pentapeptide onto the lipid carrier undecaprenyl phosphate, yielding undecaprenyl-pyrophosphoryl-MurNAc-pentapeptide, known as lipid I. This Leuconostoc mesenteroides subsp. mesenteroides (strain ATCC 8293 / DSM 20343 / BCRC 11652 / CCM 1803 / JCM 6124 / NCDO 523 / NBRC 100496 / NCIMB 8023 / NCTC 12954 / NRRL B-1118 / 37Y) protein is Phospho-N-acetylmuramoyl-pentapeptide-transferase.